The primary structure comprises 945 residues: 26S proteasome regulatory subunit RPN2 (945 aa).

Serine 2 bears the N-acetylserine mark. 10 PC repeats span residues 366-399, 403-440, 445-479, 480-514, 516-549, 550-585, 586-618, 620-654, 655-692, and 698-734; these read TATASLGVIHKGNLLEGKKVMAPYLPGSRASSRF, GSLYGLGLIYAGFGRDTTDYLKNIIVENSGTSGDEDVD, GASLGIGLAAMGSANIEVYEALKEVLYNDSATSGE, AAALGMGLCMLGTGKPEAIHDMFTYSQETQHGNIT, GLAVGLALINYGRQELADDLITKMLASDESLLRY, GGAFTIALAYAGTGNNSAVKRLLHVAVSDSNDDVRR, AAVIALGFVLLRDYTTVPRIVQLLSKSHNAHVR, GTAFALGIACAGKGLQSAIDVLDPLTKDPVDFVRQ, AAMIALSMILIQQTEKLNPQVADINKNFLSVITNKHQE, and GACVAQGIMNAGGRNVTIQLENADTGTLDTKSVVGLV. At threonine 801 the chain carries Phosphothreonine. Over residues 810-819 the composition is skewed to basic residues; that stretch reads AKARAKKTKK. The segment at 810–851 is disordered; the sequence is AKARAKKTKKEKGPNEEEKKKEHEEKEKERETNKKGIKETKE. Basic and acidic residues predominate over residues 820–851; the sequence is EKGPNEEEKKKEHEEKEKERETNKKGIKETKE. Residue threonine 932 is modified to Phosphothreonine.

Belongs to the proteasome subunit S1 family. In terms of assembly, interacts with UBR1. Post-translationally, N-acetylated by NAT1.

Functionally, acts as a regulatory subunit of the 26S proteasome which is involved in the ATP-dependent degradation of ubiquitinated proteins. This chain is 26S proteasome regulatory subunit RPN2 (RPN2), found in Saccharomyces cerevisiae (strain ATCC 204508 / S288c) (Baker's yeast).